Consider the following 487-residue polypeptide: Glutamyl-tRNA(Gln) amidotransferase subunit A (487 aa).

Residues Lys82 and Ser157 each act as charge relay system in the active site. The active-site Acyl-ester intermediate is the Ser181.

The protein belongs to the amidase family. GatA subfamily. As to quaternary structure, heterotrimer of A, B and C subunits.

The catalysed reaction is L-glutamyl-tRNA(Gln) + L-glutamine + ATP + H2O = L-glutaminyl-tRNA(Gln) + L-glutamate + ADP + phosphate + H(+). Functionally, allows the formation of correctly charged Gln-tRNA(Gln) through the transamidation of misacylated Glu-tRNA(Gln) in organisms which lack glutaminyl-tRNA synthetase. The reaction takes place in the presence of glutamine and ATP through an activated gamma-phospho-Glu-tRNA(Gln). The chain is Glutamyl-tRNA(Gln) amidotransferase subunit A from Fusobacterium nucleatum subsp. nucleatum (strain ATCC 25586 / DSM 15643 / BCRC 10681 / CIP 101130 / JCM 8532 / KCTC 2640 / LMG 13131 / VPI 4355).